We begin with the raw amino-acid sequence, 739 residues long: Phosphoribosylformylglycinamidine synthase subunit PurL (739 aa).

Residue histidine 54 is part of the active site. Positions 57 and 96 each coordinate ATP. Glutamate 98 serves as a coordination point for Mg(2+). Substrate-binding positions include 99 to 102 and arginine 121; that span reads SHNH. Histidine 100 serves as the catalytic Proton acceptor. Aspartate 122 lines the Mg(2+) pocket. Glutamine 245 serves as a coordination point for substrate. A Mg(2+)-binding site is contributed by aspartate 273. 317–319 contributes to the substrate binding site; it reads ESQ. Positions 500 and 537 each coordinate ATP. Asparagine 538 contacts Mg(2+). Serine 540 serves as a coordination point for substrate.

The protein belongs to the FGAMS family. As to quaternary structure, monomer. Part of the FGAM synthase complex composed of 1 PurL, 1 PurQ and 2 PurS subunits.

It is found in the cytoplasm. The enzyme catalyses N(2)-formyl-N(1)-(5-phospho-beta-D-ribosyl)glycinamide + L-glutamine + ATP + H2O = 2-formamido-N(1)-(5-O-phospho-beta-D-ribosyl)acetamidine + L-glutamate + ADP + phosphate + H(+). It participates in purine metabolism; IMP biosynthesis via de novo pathway; 5-amino-1-(5-phospho-D-ribosyl)imidazole from N(2)-formyl-N(1)-(5-phospho-D-ribosyl)glycinamide: step 1/2. Part of the phosphoribosylformylglycinamidine synthase complex involved in the purines biosynthetic pathway. Catalyzes the ATP-dependent conversion of formylglycinamide ribonucleotide (FGAR) and glutamine to yield formylglycinamidine ribonucleotide (FGAM) and glutamate. The FGAM synthase complex is composed of three subunits. PurQ produces an ammonia molecule by converting glutamine to glutamate. PurL transfers the ammonia molecule to FGAR to form FGAM in an ATP-dependent manner. PurS interacts with PurQ and PurL and is thought to assist in the transfer of the ammonia molecule from PurQ to PurL. The protein is Phosphoribosylformylglycinamidine synthase subunit PurL of Bacillus anthracis (strain A0248).